A 309-amino-acid chain; its full sequence is Porphobilinogen deaminase (309 aa).

C242 carries the post-translational modification S-(dipyrrolylmethanemethyl)cysteine.

Belongs to the HMBS family. In terms of assembly, monomer. Dipyrromethane serves as cofactor.

The enzyme catalyses 4 porphobilinogen + H2O = hydroxymethylbilane + 4 NH4(+). It functions in the pathway porphyrin-containing compound metabolism; protoporphyrin-IX biosynthesis; coproporphyrinogen-III from 5-aminolevulinate: step 2/4. Its function is as follows. Tetrapolymerization of the monopyrrole PBG into the hydroxymethylbilane pre-uroporphyrinogen in several discrete steps. The polypeptide is Porphobilinogen deaminase (Legionella pneumophila subsp. pneumophila (strain Philadelphia 1 / ATCC 33152 / DSM 7513)).